The chain runs to 289 residues: Epoxyqueuosine reductase (289 aa).

D111 (proton donor) is an active-site residue. The 4Fe-4S ferredoxin-type domain occupies 156–185 (QGDRPHSQHCGTCTRCLEACPTQAIVEPFV). [4Fe-4S] cluster contacts are provided by C165, C168, C171, C175, C191, C219, C222, and C226.

The protein belongs to the QueG family. In terms of assembly, monomer. Cob(II)alamin serves as cofactor. It depends on [4Fe-4S] cluster as a cofactor.

The protein localises to the cytoplasm. It catalyses the reaction epoxyqueuosine(34) in tRNA + AH2 = queuosine(34) in tRNA + A + H2O. It participates in tRNA modification; tRNA-queuosine biosynthesis. In terms of biological role, catalyzes the conversion of epoxyqueuosine (oQ) to queuosine (Q), which is a hypermodified base found in the wobble positions of tRNA(Asp), tRNA(Asn), tRNA(His) and tRNA(Tyr). The polypeptide is Epoxyqueuosine reductase (Synechocystis sp. (strain ATCC 27184 / PCC 6803 / Kazusa)).